The primary structure comprises 144 residues: Flagellar assembly factor FliW (144 aa).

The protein belongs to the FliW family. In terms of assembly, monomer. One copy interacts with the each alpha-helical wing of the CsrA homodimer, yielding a FliW-CsrA(2)-FliW complex. Comparison with a CsrA-mRNA structure (2JPP) suggests CsrA cannot bind both mRNA and FliW at the same time. Interacts with flagellin.

It localises to the cytoplasm. Acts as an anti-CsrA protein, binds CsrA and prevents it from repressing translation of its target genes, one of which is flagellin. Binds to flagellin and participates in the assembly of the flagellum. Functionally, allosterically inhibits CsrA binding to mRNA in a non-competitive fashion by preventing CsrA binding to the 5'-UTR. In Geobacillus thermodenitrificans (strain NG80-2), this protein is Flagellar assembly factor FliW.